The chain runs to 434 residues: Perilipin-3 (434 aa).

A disordered region spans residues 1-22; it reads MSADGAEADGSTQVTVEEPVQQ. Ser-2 is modified (N-acetylserine). Ser-31 carries the phosphoserine modification. An N6-acetyllysine modification is found at Lys-65. Position 91 is a phosphoserine (Ser-91). A Glycyl lysine isopeptide (Lys-Gly) (interchain with G-Cter in SUMO1) cross-link involves residue Lys-122. Phosphoserine is present on residues Ser-130 and Ser-148. Position 170 is a phosphothreonine (Thr-170). Phosphoserine occurs at positions 175 and 179. At Thr-216 the chain carries Phosphothreonine. Phosphoserine occurs at positions 217 and 241. Tyr-251 carries the phosphotyrosine modification. Coiled coils occupy residues 252-277 and 353-377; these read EHSLGKLRATKQRAQEALLQLSQVLS and TNVKDQVQQARRQVEDLQATFSSIH.

Belongs to the perilipin family. Homooligomer. Interacts with M6PR (via the cytoplasmic domain). Interacts with IGF2R (via the cytoplasmic domain). In terms of assembly, may exist as a homodimer. In terms of processing, phosphorylation at Tyr-251 by isoform 1 of CHKA (CHKalpha2) promotes dissociation from lipid droplets: dissociation is followed by recruitment of autophagosome machinery to lipid droplets and subsequent lipid droplet lipolysis.

The protein resides in the lipid droplet. The protein localises to the endosome membrane. It localises to the cytoplasm. In terms of biological role, structural component of lipid droplets, which is required for the formation and maintenance of lipid storage droplets. Required for the transport of mannose 6-phosphate receptors (MPR) from endosomes to the trans-Golgi network. This is Perilipin-3 (PLIN3) from Homo sapiens (Human).